Consider the following 1091-residue polypeptide: AP-3 complex subunit beta-1 (1091 aa).

Disordered regions lie at residues 1-32 (MSGNSFAYSEQAGGGEATELGQEATSTVSPSG) and 267-290 (EDNEKNFYESDDEQKEKTDQKKKP). Over residues 267–288 (EDNEKNFYESDDEQKEKTDQKK) the composition is skewed to basic and acidic residues. Residues Ser-276 and Ser-609 each carry the phosphoserine modification. Residues 664-807 (AGKAKKENPA…EKEKKTKEDR (144 aa)) are disordered. The span at 667-678 (AKKENPARKFYS) shows a compositional bias: basic and acidic residues. Acidic residues-rich tracts occupy residues 679–695 (DSEEEEDSSDSSSDSES) and 703–718 (EQDEEGDSSEDSSEDS). Residues 719–736 (SSEHRSDSESVSEVGDKR) are compositionally biased toward basic and acidic residues. Phosphoserine occurs at positions 748 and 750. A compositionally biased stretch (low complexity) spans 763-775 (SDSSSTDSSSVEE). The segment covering 776–789 (SSSDSESESESESE) has biased composition (acidic residues). A compositionally biased stretch (basic and acidic residues) spans 790–807 (SESKKVTMEKEKKTKEDR).

The protein belongs to the adaptor complexes large subunit family. As to quaternary structure, adaptor protein complex 3 (AP-3) is a heterotetramer composed of two large adaptins (delta-type subunit AP3D1 and beta-type subunit AP3B1 or AP3B2), a medium adaptin (mu-type subunit AP3M1 or AP3M2) and a small adaptin (sigma-type subunit APS1 or AP3S2). AP-3 associates with the BLOC-1 complex. Interacts with KIF3A; interaction is direct; interaction is impaired by pyrophosphorylation of AP3B1. In terms of processing, phosphorylated on serine residues. Post-translationally, pyrophosphorylation by 5-diphosphoinositol pentakisphosphate (5-IP7) impairs interaction with KIF3A. Serine pyrophosphorylation is achieved by Mg(2+)-dependent, but enzyme independent transfer of a beta-phosphate from a inositol pyrophosphate to a pre-phosphorylated serine residue.

It localises to the cytoplasmic vesicle. The protein localises to the clathrin-coated vesicle membrane. Its subcellular location is the golgi apparatus. Its function is as follows. Subunit of non-clathrin- and clathrin-associated adaptor protein complex 3 (AP-3) that plays a role in protein sorting in the late-Golgi/trans-Golgi network (TGN) and/or endosomes. The AP complexes mediate both the recruitment of clathrin to membranes and the recognition of sorting signals within the cytosolic tails of transmembrane cargo molecules. AP-3 appears to be involved in the sorting of a subset of transmembrane proteins targeted to lysosomes and lysosome-related organelles. In concert with the BLOC-1 complex, AP-3 is required to target cargos into vesicles assembled at cell bodies for delivery into neurites and nerve terminals. The polypeptide is AP-3 complex subunit beta-1 (AP3B1) (Canis lupus familiaris (Dog)).